The sequence spans 1205 residues: MRKPRRKSRQNAEGRRSPSPYSLKCSPTRETLTYAQAQRIVEVDIDGRLHRISIYDPLKIITEDELTAQDITECNSNKENSEQPQFPGKSKKPSSKGKKKESCSKHASGTSFHLPQPSFRMVDSGIQPEAPPLPAAYYRYIEKPPEDLDAEVEYDMDEEDLAWLDMVNEKRRVDGHSLVSADTFELLVDRLEKESYLESRSSGAQQSLIDEDAFCCVCLDDECHNSNVILFCDICNLAVHQECYGVPYIPEGQWLCRCCLQSPSRPVDCILCPNKGGAFKQTSDGHWAHVVCAIWIPEVCFANTVFLEPIEGIDNIPPARWKLTCYICKQKGLGAAIQCHKVNCYTAFHVTCAQRAGLFMKIEPMRETSLNGTIFTVRKTAYCEAHSPPGAATARRKGDSPRSISETGDEEGLKEGDGEEEEEEEVEEEEQEAQGGVSGSLKGVPKKSKMSLKQKIKKEPEEAGQDTPSTLPMLAVPQIPSYRLNKICSGLSFQRKNQFMQRLHNYWLLKRQARNGVPLIRRLHSHLQSQRNAEQREQDEKTSAVKEELKYWQKLRHDLERARLLIELIRKREKLKREQVKVQQAAMELELMPFNVLLRTTLDLLQEKDPAHIFAEPVNLSEVPDYLEFISKPMDFSTMRRKLESHLYRTLEEFEEDFNLIVTNCMKYNAKDTIFHRAAVRLRDLGGAILRHARRQAENIGYDPERGTHLPESPKLEDFYRFSWEDVDNILIPENRAHLSPEVQLKELLEKLDLVSAMRSSGARTRRVRLLRREINALRQKLAQPPPPQPPSLNKTVSNGELPAGPQGDAAVLEQALQEEPEDDGDRDDSKLPPPPTLEPTGPAPSLSEQESPPEPPTLKPINDSKPPSRFLKPRKVEEDELLEKSPLQLGNEPLQRLLSDNGINRLSLMAPDTPAGTPLSGVGRRTSVLFKKAKNGVKLQRSPDRVLENGEDHGVAGSPASPASIEEERHSRKRPRSRSCSESEGERSPQQEEETGMTNGFGKHTESGSDSECSLGLSGGLAFEACSGLTPPKRSRGKPALSRVPFLEGVNGDSDYNGSGRSLLLPFEDRGDLEPLELVWAKCRGYPSYPALIIDPKMPREGLLHNGVPIPVPPLDVLKLGEQKQAEAGEKLFLVLFFDNKRTWQWLPRDKVLPLGVEDTVDKLKMLEGRKTSIRKSVQVAYDRAMIHLSRVRGPHSFVTSSYL.

Disordered regions lie at residues 1-27 (MRKP…KCSP) and 75-121 (NSNK…SFRM). Position 17 is a phosphoserine (Ser-17). The span at 75–84 (NSNKENSEQP) shows a compositional bias: polar residues. The segment covering 89 to 99 (KSKKPSSKGKK) has biased composition (basic residues). The segment at 212–262 (DAFCCVCLDDECHNSNVILFCDICNLAVHQECYGVPYIPEGQWLCRCCLQS) adopts a PHD-type 1 zinc-finger fold. The C2HC pre-PHD-type zinc finger occupies 266–299 (PVDCILCPNKGGAFKQTSDGHWAHVVCAIWIPEV). A PHD-type 2 zinc finger spans residues 323-387 (LTCYICKQKG…RKTAYCEAHS (65 aa)). The tract at residues 387–472 (SPPGAATARR…AGQDTPSTLP (86 aa)) is disordered. Ser-400 and Ser-403 each carry phosphoserine. A compositionally biased stretch (acidic residues) spans 417–432 (DGEEEEEEEVEEEEQE). Over residues 444 to 456 (VPKKSKMSLKQKI) the composition is skewed to basic residues. Lys-447, Lys-449, and Lys-671 each carry N6-acetyllysine. The Bromo domain occupies 589-693 (LELMPFNVLL…DLGGAILRHA (105 aa)). Phosphoserine is present on residues Ser-713 and Ser-740. The tract at residues 779–897 (RQKLAQPPPP…LQLGNEPLQR (119 aa)) is disordered. A compositionally biased stretch (acidic residues) spans 817 to 827 (LQEEPEDDGDR). The segment covering 839-851 (EPTGPAPSLSEQE) has biased composition (low complexity). Ser-900 is modified (phosphoserine). Disordered regions lie at residues 907 to 926 (LSLM…VGRR) and 931 to 1015 (FKKA…SECS). Over residues 942 to 955 (RSPDRVLENGEDHG) the composition is skewed to basic and acidic residues. 2 positions are modified to phosphoserine: Ser-962 and Ser-965. A compositionally biased stretch (basic and acidic residues) spans 980–991 (SCSESEGERSPQ). In terms of domain architecture, PWWP spans 1076–1159 (PLELVWAKCR…RDKVLPLGVE (84 aa)).

In terms of assembly, component of some HBO1 complex composed of KAT7/HBO1, MEAF6, ING4 or ING5, and BRPF3. Component of the MOZ/MORF complex composed at least of ING5, KAT6A, KAT6B, MEAF6 and one of BRPF1, BRD1/BRPF2 and BRPF3. Interacts with KAT7/HBO1; the interaction is direct.

The protein localises to the nucleus. Its function is as follows. Scaffold subunit of various histone acetyltransferase (HAT) complexes, such as the MOZ/MORF and HBO1 complexes, which have a histone H3 acetyltransferase activity. Plays a role in DNA replication initiation by directing KAT7/HBO1 specificity towards histone H3 'Lys-14' acetylation (H3K14ac), thereby facilitating the activation of replication origins. Component of the MOZ/MORF complex which has a histone H3 acetyltransferase activity. In Homo sapiens (Human), this protein is Bromodomain and PHD finger-containing protein 3.